The primary structure comprises 369 residues: Isocitrate dehydrogenase [NAD] subunit 2, mitochondrial (369 aa).

Residues 1-15 (MLRNTFFRNTSRRFL) constitute a mitochondrion transit peptide. At threonine 105 the chain carries Phosphothreonine. The substrate site is built by arginine 119, arginine 129, and arginine 150. Threonine 153 bears the Phosphothreonine mark. Residue aspartate 237 coordinates substrate. Residues aspartate 237, aspartate 263, and aspartate 267 each contribute to the Mg(2+) site. Residues threonine 327 and threonine 349 each carry the phosphothreonine modification.

This sequence belongs to the isocitrate and isopropylmalate dehydrogenases family. In terms of assembly, octamer of two non-identical subunits IDH1 and IDH2. Mg(2+) is required as a cofactor. The cofactor is Mn(2+).

Its subcellular location is the mitochondrion matrix. The catalysed reaction is D-threo-isocitrate + NAD(+) = 2-oxoglutarate + CO2 + NADH. Allosterically regulated by several compounds including AMP, NAD(+), and citrate. Performs an essential role in the oxidative function of the citric acid cycle. Also binds RNA; specifically to the 5'-untranslated leaders of mitochondrial mRNAs. This Saccharomyces cerevisiae (strain ATCC 204508 / S288c) (Baker's yeast) protein is Isocitrate dehydrogenase [NAD] subunit 2, mitochondrial (IDH2).